We begin with the raw amino-acid sequence, 385 residues long: Na(+)/H(+) antiporter NhaA (385 aa).

The next 11 helical transmembrane spans lie at 9–29, 45–65, 87–107, 114–134, 155–175, 198–218, 220–235, 245–265, 282–302, 312–332, and 345–365; these read YSAI…NVLD, IFGL…VFFF, IIPG…YLSV, GWPV…AIFG, AGIV…WIIV, TFLI…SVYQ, GIHA…IMLN, ALEP…AAMV, ILLG…IIAL, FFNL…SLLM, and QGVI…IILM.

The protein belongs to the NhaA Na(+)/H(+) (TC 2.A.33) antiporter family.

It is found in the cell membrane. It carries out the reaction Na(+)(in) + 2 H(+)(out) = Na(+)(out) + 2 H(+)(in). In terms of biological role, na(+)/H(+) antiporter that extrudes sodium in exchange for external protons. This is Na(+)/H(+) antiporter NhaA from Tropheryma whipplei (strain TW08/27) (Whipple's bacillus).